We begin with the raw amino-acid sequence, 1025 residues long: Multidrug resistance protein MdtC (1025 aa).

The next 12 helical transmembrane spans lie at 3-23 (FFALFIYRPVATILLSVAITL), 333-353 (EVEQTLIISVALVILVVFLFL), 360-380 (IIPAVAVPVSLIGTFAAMYLC), 387-407 (LSLMALTIATGFVVDDAIVVL), 431-451 (VGFTVLSMSLSLVAVFLPLLL), 463-483 (FAVTLSVAIGISLLVSLTLTP), 528-548 (LVGVVLLGTIALNIWLYISIP), 853-873 (VILIIAAIATVYIVLGILYES), 875-895 (VHPLTILSTLPSAGVGALLAL), 897-917 (LFNAPFSLIALIGIMLLIGIV), 953-973 (PIMMTTLAALFGALPLVLSGG), and 984-1004 (ITIVGGLVMSQLLTLYTTPVV).

It belongs to the resistance-nodulation-cell division (RND) (TC 2.A.6) family. MdtC subfamily. Part of a tripartite efflux system composed of MdtA, MdtB and MdtC. MdtC forms a heteromultimer with MdtB.

It localises to the cell inner membrane. Its function is as follows. The MdtABC tripartite complex confers resistance against novobiocin and deoxycholate. This is Multidrug resistance protein MdtC from Escherichia coli O7:K1 (strain IAI39 / ExPEC).